A 209-amino-acid chain; its full sequence is Uracil phosphoribosyltransferase (209 aa).

5-phospho-alpha-D-ribose 1-diphosphate contacts are provided by residues R79, R104, and 131–139 (DPMLATGGS). Residues I194 and 199–201 (GDA) contribute to the uracil site. D200 serves as a coordination point for 5-phospho-alpha-D-ribose 1-diphosphate.

It belongs to the UPRTase family. Mg(2+) serves as cofactor.

It catalyses the reaction UMP + diphosphate = 5-phospho-alpha-D-ribose 1-diphosphate + uracil. The protein operates within pyrimidine metabolism; UMP biosynthesis via salvage pathway; UMP from uracil: step 1/1. Allosterically activated by GTP. In terms of biological role, catalyzes the conversion of uracil and 5-phospho-alpha-D-ribose 1-diphosphate (PRPP) to UMP and diphosphate. The protein is Uracil phosphoribosyltransferase of Chromohalobacter salexigens (strain ATCC BAA-138 / DSM 3043 / CIP 106854 / NCIMB 13768 / 1H11).